We begin with the raw amino-acid sequence, 748 residues long: Cysteine--tRNA ligase, cytoplasmic (748 aa).

Residues 1 to 25 form a disordered region; sequence MADSSGQQGKGRRVQPQWSPPAGTQ. Residue Ala-2 is modified to N-acetylalanine. The residue at position 19 (Ser-19) is a Phosphoserine. Cys-55 contacts Zn(2+). An L-cysteine-binding site is contributed by Gly-56. The 'HIGH' region signature appears at 57–67; it reads PTVYDASHMGH. Arg-79 is subject to Phosphoserine. An L-cysteine-binding site is contributed by Thr-96. The 'KIIK' region signature appears at 101–104; that stretch reads KIIK. Ser-305 and Ser-307 each carry phosphoserine. Cys-348, His-373, and Glu-377 together coordinate Zn(2+). An L-cysteine-binding site is contributed by His-373. Residues 406-410 carry the 'KMSKS' region motif; that stretch reads KMSKS. Lys-409 contributes to the ATP binding site. N6-acetyllysine is present on Lys-503. Over residues 653-679 the composition is skewed to basic and acidic residues; sequence EKRRVEEEKRKKKEEAARRKQEQEAAK. Residues 653–686 are disordered; it reads EKRRVEEEKRKKKEEAARRKQEQEAAKLAKMKIP. Ser-746 is modified (phosphoserine).

The protein belongs to the class-I aminoacyl-tRNA synthetase family. In terms of assembly, homodimer. It depends on Zn(2+) as a cofactor.

The protein localises to the cytoplasm. It carries out the reaction tRNA(Cys) + L-cysteine + ATP = L-cysteinyl-tRNA(Cys) + AMP + diphosphate. Its function is as follows. Catalyzes the ATP-dependent ligation of cysteine to tRNA(Cys). The protein is Cysteine--tRNA ligase, cytoplasmic of Homo sapiens (Human).